The sequence spans 234 residues: Ubiquinone biosynthesis O-methyltransferase (234 aa).

Positions 37, 56, 77, and 121 each coordinate S-adenosyl-L-methionine.

The protein belongs to the methyltransferase superfamily. UbiG/COQ3 family.

The catalysed reaction is a 3-demethylubiquinol + S-adenosyl-L-methionine = a ubiquinol + S-adenosyl-L-homocysteine + H(+). It carries out the reaction a 3-(all-trans-polyprenyl)benzene-1,2-diol + S-adenosyl-L-methionine = a 2-methoxy-6-(all-trans-polyprenyl)phenol + S-adenosyl-L-homocysteine + H(+). The protein operates within cofactor biosynthesis; ubiquinone biosynthesis. In terms of biological role, O-methyltransferase that catalyzes the 2 O-methylation steps in the ubiquinone biosynthetic pathway. This Aromatoleum aromaticum (strain DSM 19018 / LMG 30748 / EbN1) (Azoarcus sp. (strain EbN1)) protein is Ubiquinone biosynthesis O-methyltransferase.